The sequence spans 202 residues: Holliday junction branch migration complex subunit RuvA (202 aa).

The domain I stretch occupies residues 1–64 (MIGYLKGQIL…YDGTVLYGFL (64 aa)). A domain II region spans residues 65 to 146 (TKEDKQLWAI…AVTIAGVPKI (82 aa)). The interval 147–155 (KIEGEAPFM) is flexible linker. Positions 155 to 202 (MSEVMMALTALGYSPMEARKAIDQLYKTGLANDSVENIIRAALRILKK) are domain III.

The protein belongs to the RuvA family. As to quaternary structure, homotetramer. Forms an RuvA(8)-RuvB(12)-Holliday junction (HJ) complex. HJ DNA is sandwiched between 2 RuvA tetramers; dsDNA enters through RuvA and exits via RuvB. An RuvB hexamer assembles on each DNA strand where it exits the tetramer. Each RuvB hexamer is contacted by two RuvA subunits (via domain III) on 2 adjacent RuvB subunits; this complex drives branch migration. In the full resolvosome a probable DNA-RuvA(4)-RuvB(12)-RuvC(2) complex forms which resolves the HJ.

It is found in the cytoplasm. In terms of biological role, the RuvA-RuvB-RuvC complex processes Holliday junction (HJ) DNA during genetic recombination and DNA repair, while the RuvA-RuvB complex plays an important role in the rescue of blocked DNA replication forks via replication fork reversal (RFR). RuvA specifically binds to HJ cruciform DNA, conferring on it an open structure. The RuvB hexamer acts as an ATP-dependent pump, pulling dsDNA into and through the RuvAB complex. HJ branch migration allows RuvC to scan DNA until it finds its consensus sequence, where it cleaves and resolves the cruciform DNA. The protein is Holliday junction branch migration complex subunit RuvA of Elusimicrobium minutum (strain Pei191).